The sequence spans 176 residues: N-alpha-acetyltransferase NAT5 (176 aa).

An N-acetyltransferase domain is found at 14–176 (NNLGMLTKLA…DAILLKKHIS (163 aa)).

The protein belongs to the acetyltransferase family. As to quaternary structure, component of the N-terminal acetyltransferase A (NatA) complex, which is composed of ARD1, NAT1 and NAT5.

It is found in the cytoplasm. It carries out the reaction N-terminal L-methionyl-L-alanyl-[protein] + acetyl-CoA = N-terminal N(alpha)-acetyl-L-methionyl-L-alanyl-[protein] + CoA + H(+). The catalysed reaction is N-terminal L-methionyl-L-seryl-[protein] + acetyl-CoA = N-terminal N(alpha)-acetyl-L-methionyl-L-seryl-[protein] + CoA + H(+). It catalyses the reaction N-terminal L-methionyl-L-valyl-[protein] + acetyl-CoA = N-terminal N(alpha)-acetyl-L-methionyl-L-valyl-[protein] + CoA + H(+). The enzyme catalyses N-terminal L-methionyl-L-threonyl-[protein] + acetyl-CoA = N-terminal N(alpha)-acetyl-L-methionyl-L-threonyl-[protein] + CoA + H(+). It carries out the reaction N-terminal L-methionyl-L-lysyl-[protein] + acetyl-CoA = N-terminal N(alpha)-acetyl-L-methionyl-L-lysyl-[protein] + CoA + H(+). The catalysed reaction is N-terminal L-methionyl-L-leucyl-[protein] + acetyl-CoA = N-terminal N(alpha)-acetyl-L-methionyl-L-leucyl-[protein] + CoA + H(+). It catalyses the reaction N-terminal L-methionyl-L-phenylalanyl-[protein] + acetyl-CoA = N-terminal N(alpha)-acetyl-L-methionyl-L-phenylalanyl-[protein] + CoA + H(+). The enzyme catalyses N-terminal L-methionyl-L-tyrosyl-[protein] + acetyl-CoA = N-terminal N(alpha)-acetyl-L-methionyl-L-tyrosyl-[protein] + CoA + H(+). Functionally, N-alpha-acetyltransferase that acetylates the N-terminus of proteins that retain their initiating methionine. Has a broad substrate specificity: able to acetylate the initiator methionine of most peptides. Non-essential component of the NatA N-terminal acetyltransferase. The sequence is that of N-alpha-acetyltransferase NAT5 from Saccharomyces cerevisiae (strain ATCC 204508 / S288c) (Baker's yeast).